The chain runs to 401 residues: Dual-specificity RNA methyltransferase RlmN (401 aa).

Glu114 (proton acceptor) is an active-site residue. The 246-residue stretch at 120–365 (DKGRGTLCVS…TIVRRTRGDD (246 aa)) folds into the Radical SAM core domain. Cys127 and Cys370 are oxidised to a cystine. Cys134, Cys138, and Cys141 together coordinate [4Fe-4S] cluster. Residues 187 to 188 (GE), Ser219, 241 to 243 (SLH), and Asn327 contribute to the S-adenosyl-L-methionine site. The active-site S-methylcysteine intermediate is Cys370.

It belongs to the radical SAM superfamily. RlmN family. [4Fe-4S] cluster serves as cofactor.

It localises to the cytoplasm. The catalysed reaction is adenosine(2503) in 23S rRNA + 2 reduced [2Fe-2S]-[ferredoxin] + 2 S-adenosyl-L-methionine = 2-methyladenosine(2503) in 23S rRNA + 5'-deoxyadenosine + L-methionine + 2 oxidized [2Fe-2S]-[ferredoxin] + S-adenosyl-L-homocysteine. It carries out the reaction adenosine(37) in tRNA + 2 reduced [2Fe-2S]-[ferredoxin] + 2 S-adenosyl-L-methionine = 2-methyladenosine(37) in tRNA + 5'-deoxyadenosine + L-methionine + 2 oxidized [2Fe-2S]-[ferredoxin] + S-adenosyl-L-homocysteine. Specifically methylates position 2 of adenine 2503 in 23S rRNA and position 2 of adenine 37 in tRNAs. m2A2503 modification seems to play a crucial role in the proofreading step occurring at the peptidyl transferase center and thus would serve to optimize ribosomal fidelity. The chain is Dual-specificity RNA methyltransferase RlmN from Xanthomonas oryzae pv. oryzae (strain MAFF 311018).